The sequence spans 468 residues: Aldehyde dehydrogenase family 3 member B1 (468 aa).

The residue at position 1 (Met-1) is an N-acetylmethionine. Residue 188-193 (GNPQVG) coordinates NAD(+). Residues Glu-210 and Cys-244 contribute to the active site. Cys-463 is lipidated: S-palmitoyl cysteine. Position 465 is a cysteine methyl ester (Cys-465). Residue Cys-465 is the site of S-geranylgeranyl cysteine attachment. A propeptide spans 466 to 468 (TLL) (removed in mature form).

This sequence belongs to the aldehyde dehydrogenase family. Dually lipidated in the C-terminus; prenylation occurs prior to, and is a prerequisite for palmitoylation. It is also required for activity towards long-chain substrates.

The protein resides in the cell membrane. The catalysed reaction is an aldehyde + NAD(+) + H2O = a carboxylate + NADH + 2 H(+). It catalyses the reaction a long-chain fatty aldehyde + NAD(+) + H2O = a long-chain fatty acid + NADH + 2 H(+). The enzyme catalyses a medium-chain fatty aldehyde + NAD(+) + H2O = a medium-chain fatty acid + NADH + 2 H(+). It carries out the reaction octanal + NAD(+) + H2O = octanoate + NADH + 2 H(+). The catalysed reaction is nonanal + NAD(+) + H2O = nonanoate + NADH + 2 H(+). It catalyses the reaction hexadecanoate + NADH + 2 H(+) = hexadecanal + NAD(+) + H2O. The enzyme catalyses (2E)-octenal + NAD(+) + H2O = (2E)-octenoate + NADH + 2 H(+). It carries out the reaction (E)-non-2-enal + NAD(+) + H2O = (E)-non-2-enoate + NADH + 2 H(+). The catalysed reaction is (E)-4-hydroxynon-2-enal + NAD(+) + H2O = (E)-4-hydroxynon-2-enoate + NADH + 2 H(+). It catalyses the reaction (2E)-hexadecenal + NAD(+) + H2O = (E)-hexadec-2-enoate + NADH + 2 H(+). The enzyme catalyses benzaldehyde + NAD(+) + H2O = benzoate + NADH + 2 H(+). It carries out the reaction an aldehyde + NADP(+) + H2O = a carboxylate + NADPH + 2 H(+). The catalysed reaction is a medium-chain fatty aldehyde + NADP(+) + H2O = a medium-chain fatty acid + NADPH + 2 H(+). It catalyses the reaction hexanal + NADP(+) + H2O = hexanoate + NADPH + 2 H(+). The enzyme catalyses octanal + NADP(+) + H2O = octanoate + NADPH + 2 H(+). It carries out the reaction nonanal + NADP(+) + H2O = nonanoate + NADPH + 2 H(+). The catalysed reaction is (2E)-octenal + NADP(+) + H2O = (2E)-octenoate + NADPH + 2 H(+). It catalyses the reaction (E)-non-2-enal + NADP(+) + H2O = (E)-non-2-enoate + NADPH + 2 H(+). The enzyme catalyses (E)-4-hydroxynon-2-enal + NADP(+) + H2O = (E)-4-hydroxynon-2-enoate + NADPH + 2 H(+). It carries out the reaction benzaldehyde + NADP(+) + H2O = benzoate + NADPH + 2 H(+). It participates in alcohol metabolism; ethanol degradation; acetate from ethanol: step 2/2. Its function is as follows. Oxidizes medium and long chain saturated and unsaturated fatty aldehydes generated in the plasma membrane into non-toxic fatty acids. May have a protective role against the cytotoxicity induced by lipid peroxidation. Short-chain fatty aldehydes are not good substrates. Can use both NADP(+) and NAD(+) as electron acceptor in vitro, however in vivo preference will depend on their tissue levels. Low activity towards acetaldehyde and 3,4-dihydroxyphenylacetaldehyde. Able to metabolize aromatic aldehydes such as benzaldehyde to their acid form. The polypeptide is Aldehyde dehydrogenase family 3 member B1 (ALDH3B1) (Bos taurus (Bovine)).